A 319-amino-acid chain; its full sequence is Taste receptor type 2 member 39 (319 aa).

Topologically, residues 1 to 16 are extracellular; the sequence is MAQPSNYWKQDVLPLS. Residues 17 to 37 traverse the membrane as a helical segment; the sequence is ILMLTLVATECTIGIIASGIV. Over 38 to 65 the chain is Cytoplasmic; the sequence is MAVNAVSWVQKKAISITTRILLLLSVSR. A helical membrane pass occupies residues 66–86; that stretch reads IGLQSIMLIEITSSIFNVAFY. At 87–97 the chain is on the extracellular side; sequence NSVLYRVSNVS. N-linked (GlcNAc...) asparagine glycosylation is present at N95. A helical transmembrane segment spans residues 98–118; the sequence is FVFLNYCSLWFAALLSFFHFV. Residues 119–137 are Cytoplasmic-facing; the sequence is KIANFSYPLFFKLKWRISE. A helical transmembrane segment spans residues 138–158; sequence LMPWLLWLSVFISFSSSMFFS. Over 159–194 the chain is Extracellular; the sequence is KHKFTVNNNNSLSNNICNFTMKLYVVETNVVNVSFL. N-linked (GlcNAc...) asparagine glycans are attached at residues N167, N176, and N190. Residues 195–215 traverse the membrane as a helical segment; sequence FISGILPPLTMFVATATLLIF. Over 216–247 the chain is Cytoplasmic; that stretch reads SLRRHTLNMRNSATGSRNPCIEAHMQAIKETS. Residues 248–268 traverse the membrane as a helical segment; the sequence is CFLFLYILNAAALLLSTSNIV. At 269-273 the chain is on the extracellular side; it reads DASLF. A helical membrane pass occupies residues 274–294; the sequence is WSIVIRIVLPVYPAGHSVLLI. Over 295-319 the chain is Cytoplasmic; the sequence is QNNPGLRRTWKHLQSQIHLYLQNRF.

Belongs to the G-protein coupled receptor T2R family.

The protein resides in the membrane. Its function is as follows. Putative taste receptor which may play a role in the perception of bitterness. This is Taste receptor type 2 member 39 (Tas2r39) from Mus musculus (Mouse).